The sequence spans 177 residues: Putative thioredoxin peroxidase (177 aa).

A Thioredoxin domain is found at 1-158 (MFPKTLTDSK…IIRLIDAITF (158 aa)). Cysteine 45 functions as the Cysteine sulfenic acid (-SOH) intermediate in the catalytic mechanism.

It belongs to the peroxiredoxin family. AhpC/Prx1 subfamily. As to quaternary structure, homodimer; disulfide-linked, upon oxidation.

It carries out the reaction a hydroperoxide + [thioredoxin]-dithiol = an alcohol + [thioredoxin]-disulfide + H2O. In terms of biological role, thiol-specific peroxidase that catalyzes the reduction of hydrogen peroxide and organic hydroperoxides to water and alcohols, respectively. Plays a role in cell protection against oxidative stress by detoxifying peroxides and as sensor of hydrogen peroxide-mediated signaling events. This is Putative thioredoxin peroxidase from Encephalitozoon cuniculi (strain GB-M1) (Microsporidian parasite).